Reading from the N-terminus, the 512-residue chain is V-type proton ATPase subunit B (512 aa).

Residue Arg381 participates in ATP binding. The disordered stretch occupies residues 484-512 (LYGRDREQDDDEDEDEEDPDKSGDKLIDA). Residues 491–502 (QDDDEDEDEEDP) show a composition bias toward acidic residues. Basic and acidic residues predominate over residues 503-512 (DKSGDKLIDA).

This sequence belongs to the ATPase alpha/beta chains family. V-ATPase is a heteromultimeric enzyme composed of a peripheral catalytic V1 complex (components A to H) attached to an integral membrane V0 proton pore complex (components: a, c, c', c'', d, e, f and VOA1).

The protein resides in the vacuole membrane. Non-catalytic subunit of the V1 complex of vacuolar(H+)-ATPase (V-ATPase), a multisubunit enzyme composed of a peripheral complex (V1) that hydrolyzes ATP and a membrane integral complex (V0) that translocates protons. Plays an important role in resistance to several stresses, as well as in autophagy and virulence. In Candida albicans (strain SC5314 / ATCC MYA-2876) (Yeast), this protein is V-type proton ATPase subunit B.